The chain runs to 317 residues: MDGGGRFVFAVTGKKSTAKKREQYAATANADDRRVLPRPLRRFVRFGVSLATGRIHIPAHTGTISAVAFYAMIGLYGMSLGGHTNIVTQTTTSAAGFAVEDVKVSGNLQTSEIEVFQLLGLDGSTSLIALDIDAARRKLVQLPWVEDVDIRKVYPKTVEVRLKERQAFGIWQHGTELSLIEKSGSVIAPLRDNKFAALPLFVGRDAETGAAGFVAQLADWPEIRNRVRAYVRIAGRRWDLHLDNGIVVKLPEENLPQALQLLARLDLEEKVLSRDVAAVDLRLTDRTTIQLTEGAAERRQTAVDARTKALKKAEKNT.

Residues 1-63 (MDGGGRFVFA…RIHIPAHTGT (63 aa)) lie on the Cytoplasmic side of the membrane. A helical membrane pass occupies residues 64–82 (ISAVAFYAMIGLYGMSLGG). Residues 83 to 317 (HTNIVTQTTT…KALKKAEKNT (235 aa)) are Periplasmic-facing. Residues 97–165 (FAVEDVKVSG…KTVEVRLKER (69 aa)) form the POTRA domain.

Belongs to the FtsQ/DivIB family. FtsQ subfamily.

The protein localises to the cell inner membrane. Essential cell division protein. This chain is Cell division protein FtsQ, found in Agrobacterium fabrum (strain C58 / ATCC 33970) (Agrobacterium tumefaciens (strain C58)).